A 263-amino-acid polypeptide reads, in one-letter code: Putative S-adenosyl-L-methionine-dependent methyltransferase Mkms_0098 (263 aa).

S-adenosyl-L-methionine-binding positions include D121 and 150-151 (ES).

The protein belongs to the UPF0677 family.

Functionally, exhibits S-adenosyl-L-methionine-dependent methyltransferase activity. This is Putative S-adenosyl-L-methionine-dependent methyltransferase Mkms_0098 from Mycobacterium sp. (strain KMS).